A 384-amino-acid polypeptide reads, in one-letter code: S-adenosylmethionine synthase (384 aa).

Histidine 15 contributes to the ATP binding site. Aspartate 17 is a binding site for Mg(2+). Glutamate 43 contributes to the K(+) binding site. 2 residues coordinate L-methionine: glutamate 56 and glutamine 99. Residues 99–109 (QSPDINQGVDR) form a flexible loop region. ATP-binding positions include 164–166 (DAK), 230–231 (RF), aspartate 239, 245–246 (RK), alanine 262, and lysine 266. Aspartate 239 contacts L-methionine. Lysine 270 provides a ligand contact to L-methionine.

It belongs to the AdoMet synthase family. In terms of assembly, homotetramer; dimer of dimers. Mg(2+) serves as cofactor. It depends on K(+) as a cofactor.

It is found in the cytoplasm. It catalyses the reaction L-methionine + ATP + H2O = S-adenosyl-L-methionine + phosphate + diphosphate. The protein operates within amino-acid biosynthesis; S-adenosyl-L-methionine biosynthesis; S-adenosyl-L-methionine from L-methionine: step 1/1. In terms of biological role, catalyzes the formation of S-adenosylmethionine (AdoMet) from methionine and ATP. The overall synthetic reaction is composed of two sequential steps, AdoMet formation and the subsequent tripolyphosphate hydrolysis which occurs prior to release of AdoMet from the enzyme. This is S-adenosylmethionine synthase from Shigella boydii serotype 18 (strain CDC 3083-94 / BS512).